The primary structure comprises 409 residues: F-box/kelch-repeat protein At1g48625 (409 aa).

The 48-residue stretch at 2 to 49 (ATMISNLPRDLMEEILSRVPLKSMRAVRLTCKNWHTLSITISESLAKM) folds into the F-box domain. Kelch repeat units follow at residues 169–218 (FIDY…LKGN) and 221–266 (WCAR…ILSC).

In Arabidopsis thaliana (Mouse-ear cress), this protein is F-box/kelch-repeat protein At1g48625.